A 114-amino-acid polypeptide reads, in one-letter code: Fumarate reductase subunit D (114 aa).

A run of 3 helical transmembrane segments spans residues 24–44, 50–70, and 92–112; these read VSAI…PFGL, LITF…TIFP, and GGFI…FAVI.

The protein belongs to the FrdD family. As to quaternary structure, part of an enzyme complex containing four subunits: a flavoprotein (FrdA), an iron-sulfur protein (FrdB), and two hydrophobic anchor proteins (FrdC and FrdD).

The protein resides in the cell inner membrane. Functionally, anchors the catalytic components of the fumarate reductase complex to the cell membrane, binds quinones. The protein is Fumarate reductase subunit D of Haemophilus influenzae (strain PittGG).